Here is a 197-residue protein sequence, read N- to C-terminus: uncharacterized protein (197 aa).

The signal sequence occupies residues 1–23 (MSARAPKELRLALPPCLLNRTFA). N-linked (GlcNAc...) asparagine glycosylation is found at asparagine 19 and asparagine 26. The Extracellular segment spans residues 24–61 (SPNASGSGNTGARGPGAGGSGTCITQVGQQLFQSFSST). Residues 62-82 (LVLIVLVTLIFCLIVLSLSTF) form a helical membrane-spanning segment. Residues 83–197 (HIHKRRMKKR…EGLLQTVVLS (115 aa)) lie on the Cytoplasmic side of the membrane. Residues 94–179 (MQRAQEEYER…ASSPQGAHAV (86 aa)) form a disordered region. 2 stretches are compositionally biased toward basic and acidic residues: residues 96–107 (RAQEEYERDHCS) and 125–136 (HAKETRLERQPR). Residues 147-161 (SSSSSSSPGLPCQGP) are compositionally biased toward low complexity. The segment covering 162 to 171 (CAPPPPPPAS) has biased composition (pro residues).

Its subcellular location is the membrane. This is an uncharacterized protein from Pongo abelii (Sumatran orangutan).